The primary structure comprises 331 residues: 6-phosphogluconolactonase (331 aa).

Residue K287 is modified to N6-acetyllysine.

The protein belongs to the cycloisomerase 2 family.

It carries out the reaction 6-phospho-D-glucono-1,5-lactone + H2O = 6-phospho-D-gluconate + H(+). It participates in carbohydrate degradation; pentose phosphate pathway; D-ribulose 5-phosphate from D-glucose 6-phosphate (oxidative stage): step 2/3. Catalyzes the hydrolysis of 6-phosphogluconolactone to 6-phosphogluconate. The polypeptide is 6-phosphogluconolactonase (Escherichia coli O139:H28 (strain E24377A / ETEC)).